A 640-amino-acid polypeptide reads, in one-letter code: Telomere repeat-binding protein 4 (640 aa).

The Ubiquitin-like domain occupies 343–422 (VKFSIKSLRI…LGNLGFTLEP (80 aa)). The interval 442-464 (TDSTKLSERSAASPALETGIPLP) is disordered. An HTH myb-type domain is found at 530–589 (SQRRTRRPFSVTEVEALVSAVEEVGTGRWRDVKLRSFENASHRTYVDLKDKWKTLVHTAS). The H-T-H motif DNA-binding region spans 558–585 (WRDVKLRSFENASHRTYVDLKDKWKTLV).

In terms of assembly, homomultimer. Interacts with SNL1 (via PAH2). Interacts with STO. In terms of tissue distribution, expressed ubiquitously. Highest expression in flowers and roots.

The protein localises to the nucleus. In terms of biological role, binds specifically to the plant telomeric double-stranded DNA sequences 5'-TTTAGGG-3'. At least 2 repeats of telomeric sequences are required for binding. Induces DNA bending. This is Telomere repeat-binding protein 4 (TRP4) from Arabidopsis thaliana (Mouse-ear cress).